A 366-amino-acid chain; its full sequence is IgG receptor FcRn large subunit p51 (366 aa).

The N-terminal stretch at 1–22 is a signal peptide; sequence MGMSQPGVLLSLLLVLLPQTWG. Residues 23-111 are alpha-1; that stretch reads AEPRLPLMYH…RTLENQINGT (89 aa). At 23–298 the chain is on the extracellular side; it reads AEPRLPLMYH…VDLDSPARSS (276 aa). N-linked (GlcNAc...) asparagine glycosylation is found at asparagine 109, asparagine 126, asparagine 150, and asparagine 247. An alpha-2 region spans residues 112–201; sequence FTLQGLLGCE…ERGRQNLEWK (90 aa). 2 cysteine pairs are disulfide-bonded: cysteine 120/cysteine 183 and cysteine 222/cysteine 276. Positions 202 to 291 are alpha-3; it reads EPPSMRLKAR…GLAQPLTVDL (90 aa). One can recognise an Ig-like C1-type domain in the interval 203 to 290; sequence PPSMRLKARP…EGLAQPLTVD (88 aa). The connecting peptide stretch occupies residues 293 to 298; sequence SPARSS. Residues 299–322 form a helical membrane-spanning segment; that stretch reads VPVVGIILGLLLVVVAIAGGVLLW. Topologically, residues 323–366 are cytoplasmic; it reads NRMRSGLPAPWLSLSGDDSGDLLPGGNLPPEAEPQGVNAFPATS. Serine 335 carries the phosphoserine modification. The tract at residues 344 to 366 is disordered; the sequence is LLPGGNLPPEAEPQGVNAFPATS.

Belongs to the immunoglobulin superfamily. FcRn complex consists of two subunits: p51, and p14 which is equivalent to beta-2-microglobulin. It forms an MHC class I-like heterodimer. Interacts with albumin/ALB; this interaction regulates ALB homeostasis. Intestinal epithelium.

The protein resides in the cell membrane. The protein localises to the endosome membrane. Cell surface receptor that transfers passive humoral immunity from the mother to the newborn. Binds to the Fc region of monomeric immunoglobulin gamma and mediates its selective uptake from milk. IgG in the milk is bound at the apical surface of the intestinal epithelium. The resultant FcRn-IgG complexes are transcytosed across the intestinal epithelium and IgG is released from FcRn into blood or tissue fluids. Throughout life, contributes to effective humoral immunity by recycling IgG and extending its half-life in the circulation. Mechanistically, monomeric IgG binding to FcRn in acidic endosomes of endothelial and hematopoietic cells recycles IgG to the cell surface where it is released into the circulation. In addition of IgG, regulates homeostasis of the other most abundant circulating protein albumin/ALB. This is IgG receptor FcRn large subunit p51 (Fcgrt) from Rattus norvegicus (Rat).